The primary structure comprises 429 residues: MQTKSILTAALLAAAPASAQLHELAVKAGLKYFGTALREGAINSDQQYNRILSDTREFGQLVPENGQKWDATEPNRGQFNFQQGDITANKARQNGQGLRCHTLIWYSQLPGWVSSGNWNRQTLEAVMKTHIDNVMGHYKGQCYAWDVVNEAVDDNGQWRNNVFLRVFGTDYLPLSFNLAKAADPDTKLYYNDYNLEYNQAKTDRAVELVKIVQDAGAPIDGVGFQGHLIVGSTPTRQQLATVLRRFTSLGVEVAYTELDIRHSRLPASQQALVTQGNDFANVVGSCLDVAGCVGVTVWSFTDKYSWIPETFSGEGDALIYDRNFNKKPAWTSISSVLAAAATNPPASSSTSVVVPTTTFVTTTTTPPPISSPIVPSTTTTSAVPTTTVSPPEPEQTRWGQCGGIGWNGPTKCQSPWTCTRLNDWYFQCL.

Residues 1–19 (MQTKSILTAALLAAAPASA) form the signal peptide. The GH10 domain maps to 43-336 (NSDQQYNRIL…KPAWTSISSV (294 aa)). Residue Glu150 is the Proton donor of the active site. The active-site Nucleophile is the Glu257. A disulfide bridge connects residues Cys286 and Cys292. Residues 364–395 (TTPPPISSPIVPSTTTTSAVPTTTVSPPEPEQ) form a disordered region. Low complexity predominate over residues 371 to 389 (SPIVPSTTTTSAVPTTTVS). Residues 393–429 (PEQTRWGQCGGIGWNGPTKCQSPWTCTRLNDWYFQCL) form the CBM1 domain.

It belongs to the glycosyl hydrolase 10 (cellulase F) family.

Its subcellular location is the secreted. The enzyme catalyses Endohydrolysis of (1-&gt;4)-beta-D-xylosidic linkages in xylans.. It participates in glycan degradation; xylan degradation. Functionally, endo-1,4-beta-xylanase involved in the hydrolysis of xylan, a major structural heterogeneous polysaccharide found in plant biomass representing the second most abundant polysaccharide in the biosphere, after cellulose. This chain is Endo-1,4-beta-xylanase 1, found in Humicola insolens (Soft-rot fungus).